Reading from the N-terminus, the 358-residue chain is MRTPRFRVQAKNVFLTYPNCSIPKEHLLSFIQTLSLPSNPKFIKICRELHQNGEPHLHALIQFEGKITITNNRLFDCVHPSCSTNFHPNIQGAKSSSDVKSYLDKDGDTVEWGQFQIDGRSARGGQQSANDAYAKALNSGSKSEALNVIRELVPKDFVLQFHNLNSNLDRIFQEPPAPYVSPFPCSSFDQVPDELEEWVADNVRDSAARPWRPNSIVIEGDSRTGKTIWARSLGPHNYLCGHLDLSPKVFNNDAWYNVIDDVDPHYLKHFKEFMGSQRDWQSNTKYGKPVQIKGGIPTIFLCNPGPTSSYKEFLDEEKQEALKAWALKNAIFITLTEPLYSGSNQSQSQTIQEASHPA.

The region spanning 7–115 (RVQAKNVFLT…DGDTVEWGQF (109 aa)) is the CRESS-DNA virus Rep endonuclease domain. Positions 14–17 (FLTY) match the RCR-1 motif. Residues glutamate 48, histidine 56, and histidine 58 each coordinate a divalent metal cation. An RCR-2 motif is present at residues 56–58 (HLH). The For DNA cleavage activity role is filled by tyrosine 102. Residues 102-105 (YLDK) carry the RCR-3 motif. A divalent metal cation is bound at residue aspartate 106. The binding to RBR1 stretch occupies residues 142-152 (KSEALNVIREL). The interval 155-175 (KDFVLQFHNLNSNLDRIFQEP) is oligomerization. 220–227 (GDSRTGKT) serves as a coordination point for ATP.

This sequence belongs to the geminiviridae Rep protein family. Homooligomer. Interacts with the replication enhancer protein (REn). Interacts with host retinoblastoma-related protein 1 (RBR1), and may thereby induce the transcription of host replicative enzymes even if the cell is not dividing anymore. Interacts with host PCNA. Interacts with host SCE1 protein. It depends on Mg(2+) as a cofactor. Requires Mn(2+) as cofactor.

It localises to the host nucleus. Functionally, essential for the replication of viral ssDNA. The closed circular ssDNA genome is first converted to a superhelical dsDNA. Rep binds a specific region at the genome origin of replication. It introduces an endonucleolytic nick within the conserved sequence 5'-TAATATTAC-3' in the intergenic region of the genome present in all geminiviruses, thereby initiating the rolling circle replication (RCR). Following cleavage, binds covalently to the 5'-phosphate of DNA as a tyrosyl ester. The cleavage gives rise to a free 3'-OH that serves as a primer for the cellular DNA polymerase. The polymerase synthesizes the (+) strand DNA by rolling circle mechanism. After one round of replication, a Rep-catalyzed nucleotidyl transfer reaction releases a circular single-stranded virus genome, thereby terminating the replication. Displays origin-specific DNA cleavage, nucleotidyl transferase, ATPase and helicase activities. The chain is Replication-associated protein from Hewittia sublobata (Coralbush).